A 613-amino-acid polypeptide reads, in one-letter code: Ribosome-associated molecular chaperone SSB1 (613 aa).

The interval 1-391 (MAEGVFPGAI…ILTGQSTSDE (391 aa)) is nucleotide binding domain (NBD). Residues 16-18 (TTY), Lys-73, 205-207 (GGT), 271-278 (ERAKRTLS), and Gly-342 contribute to the ATP site. The segment at 392–402 (TKDLLLLDVAP) is inter-domain linker. The substrate binding domain (SBD) stretch occupies residues 403–613 (LSLGVGMAGD…RAVTKAMSTR (211 aa)). The tract at residues 516 to 612 (SEEIEQMVNQ…KRAVTKAMST (97 aa)) is lid domain (SBDalpha). A Nuclear export signal motif is present at residues 574 to 582 (VEAALADAF).

It belongs to the heat shock protein 70 family. Ssb-type Hsp70 subfamily. As to quaternary structure, binds to ribosomes. Binds close to the ribosomal tunnel exit via contacts with both ribosomal proteins and rRNA. Directly interacts with nascent polypeptides. This interaction is dependent on the ribosome-associated complex (RAC). Interacts with SSE1. Interacts with FES1.

It localises to the cytoplasm. It catalyses the reaction ATP + H2O = ADP + phosphate + H(+). Its function is as follows. Ribosome-bound, Hsp70-type chaperone that assists in the cotranslational folding of newly synthesized proteins in the cytosol. Stimulates folding by interacting with nascent chains, binding to short, largely hydrophobic sequences exposed by unfolded proteins, thereby stabilizing longer, more slowly translated, and aggregation-prone nascent polypeptides and domains that cannot fold stably until fully synthesized. The Hsp70-protein substrate interaction depends on ATP-binding and on allosteric regulation between the NBD and the SBD. The ATP-bound state is characterized by a fast exchange rate of substrate (low affinity state), while in the ADP-bound state exchange is much slower (high affinity state). During the Hsp70 cycle, the chaperone switches between the ATP-bound state (open conformation) and the ADP-bound state (closed conformation) by major conformational rearrangements involving mainly the lid domain. Ssb cooperates with a specific Hsp40/Hsp70 co-chaperone termed the ribosome-associated complex (RAC), which stimulates the ATPase activity of the ribosome-associated pool of Ssbs and switches it to the high affinity substrate binding state. Hsp110 chaperone SSE1 and FES1 act as nucleotide exchange factors that cause substrate release. This is Ribosome-associated molecular chaperone SSB1 (SSB1) from Kluyveromyces marxianus (Yeast).